The following is a 230-amino-acid chain: Sugar fermentation stimulation protein homolog (230 aa).

It belongs to the SfsA family.

The polypeptide is Sugar fermentation stimulation protein homolog (Thermoanaerobacter pseudethanolicus (strain ATCC 33223 / 39E) (Clostridium thermohydrosulfuricum)).